The sequence spans 190 residues: Adenine phosphoribosyltransferase (190 aa).

It belongs to the purine/pyrimidine phosphoribosyltransferase family. As to quaternary structure, homodimer.

The protein resides in the cytoplasm. The catalysed reaction is AMP + diphosphate = 5-phospho-alpha-D-ribose 1-diphosphate + adenine. It functions in the pathway purine metabolism; AMP biosynthesis via salvage pathway; AMP from adenine: step 1/1. Functionally, catalyzes a salvage reaction resulting in the formation of AMP, that is energically less costly than de novo synthesis. The polypeptide is Adenine phosphoribosyltransferase (Cupriavidus necator (strain ATCC 17699 / DSM 428 / KCTC 22496 / NCIMB 10442 / H16 / Stanier 337) (Ralstonia eutropha)).